The sequence spans 195 residues: 3-hydroxyanthranilate 3,4-dioxygenase (195 aa).

Arginine 50 serves as a coordination point for O2. Histidine 54, glutamate 60, and histidine 102 together coordinate Fe cation. Glutamate 60 serves as a coordination point for substrate. 2 residues coordinate substrate: arginine 106 and glutamate 116. A divalent metal cation-binding residues include cysteine 131, cysteine 136, cysteine 170, and cysteine 173.

It belongs to the 3-HAO family. Requires Fe(2+) as cofactor.

The protein resides in the cytoplasm. The catalysed reaction is 3-hydroxyanthranilate + O2 = (2Z,4Z)-2-amino-3-carboxymuconate 6-semialdehyde. It participates in cofactor biosynthesis; NAD(+) biosynthesis; quinolinate from L-kynurenine: step 3/3. In terms of biological role, catalyzes the oxidative ring opening of 3-hydroxyanthranilate to 2-amino-3-carboxymuconate semialdehyde, which spontaneously cyclizes to quinolinate. The polypeptide is 3-hydroxyanthranilate 3,4-dioxygenase (bna1) (Aspergillus terreus (strain NIH 2624 / FGSC A1156)).